We begin with the raw amino-acid sequence, 99 residues long: Large ribosomal subunit protein uL23 (99 aa).

The protein belongs to the universal ribosomal protein uL23 family. As to quaternary structure, part of the 50S ribosomal subunit. Contacts protein L29, and trigger factor when it is bound to the ribosome.

Functionally, one of the early assembly proteins it binds 23S rRNA. One of the proteins that surrounds the polypeptide exit tunnel on the outside of the ribosome. Forms the main docking site for trigger factor binding to the ribosome. The sequence is that of Large ribosomal subunit protein uL23 from Pseudomonas aeruginosa (strain LESB58).